The following is a 370-amino-acid chain: Chaperone protein DnaJ (370 aa).

Residues 6–70 (DFYEILGVSK…QKRANYDQFG (65 aa)) form the J domain. The segment at 134–216 (GANKSVTLNV…CHGKGFNTKR (83 aa)) adopts a CR-type zinc-finger fold. Cysteine 147, cysteine 150, cysteine 164, cysteine 167, cysteine 190, cysteine 193, cysteine 204, and cysteine 207 together coordinate Zn(2+). CXXCXGXG motif repeat units follow at residues 147–154 (CTSCHGSG), 164–171 (CSRCGGTG), 190–197 (CPDCGGSG), and 204–211 (CGECHGKG).

It belongs to the DnaJ family. As to quaternary structure, homodimer. Zn(2+) serves as cofactor.

The protein resides in the cytoplasm. Functionally, participates actively in the response to hyperosmotic and heat shock by preventing the aggregation of stress-denatured proteins and by disaggregating proteins, also in an autonomous, DnaK-independent fashion. Unfolded proteins bind initially to DnaJ; upon interaction with the DnaJ-bound protein, DnaK hydrolyzes its bound ATP, resulting in the formation of a stable complex. GrpE releases ADP from DnaK; ATP binding to DnaK triggers the release of the substrate protein, thus completing the reaction cycle. Several rounds of ATP-dependent interactions between DnaJ, DnaK and GrpE are required for fully efficient folding. Also involved, together with DnaK and GrpE, in the DNA replication of plasmids through activation of initiation proteins. The polypeptide is Chaperone protein DnaJ (Erysipelothrix rhusiopathiae).